A 415-amino-acid chain; its full sequence is Probable RAD2-like endonuclease 369L (415 aa).

Residues 1–114 (MGIKNLTKFI…EDVKKKTLSL (114 aa)) form an N-domain region. Residues Asp-34, Glu-86, Glu-198, Glu-200, Asp-219, Asp-221, and Asp-277 each coordinate Mg(2+). The interval 163–297 (VKQRHRYDIR…VKSYELIKVQ (135 aa)) is I-domain.

It belongs to the XPG/RAD2 endonuclease family. Mg(2+) serves as cofactor.

It localises to the host nucleus. In terms of biological role, probable endonuclease. The protein is Probable RAD2-like endonuclease 369L of Acheta domesticus (House cricket).